Reading from the N-terminus, the 411-residue chain is RING-H2 finger protein ATL65 (411 aa).

A disordered region spans residues 1–32; that stretch reads MRFVAPPPRSGDNSPSPSPSSGISEEILSRSS. Residues 10 to 21 show a composition bias toward low complexity; sequence SGDNSPSPSPSS. The chain crosses the membrane as a helical span at residues 36–56; that stretch reads LEFSPPLIAMVVVLAAAFLFV. An RING-type; atypical zinc finger spans residues 156–198; sequence CAVCLLEFEEGDYVRTLPLCFHAFHLECIDEWLRSHPNCPLCR.

The protein belongs to the RING-type zinc finger family. ATL subfamily.

The protein resides in the membrane. It catalyses the reaction S-ubiquitinyl-[E2 ubiquitin-conjugating enzyme]-L-cysteine + [acceptor protein]-L-lysine = [E2 ubiquitin-conjugating enzyme]-L-cysteine + N(6)-ubiquitinyl-[acceptor protein]-L-lysine.. It participates in protein modification; protein ubiquitination. The protein is RING-H2 finger protein ATL65 (ATL65) of Arabidopsis thaliana (Mouse-ear cress).